An 88-amino-acid chain; its full sequence is Small ribosomal subunit protein uS15 (88 aa).

It belongs to the universal ribosomal protein uS15 family. As to quaternary structure, part of the 30S ribosomal subunit. Forms a bridge to the 50S subunit in the 70S ribosome, contacting the 23S rRNA.

In terms of biological role, one of the primary rRNA binding proteins, it binds directly to 16S rRNA where it helps nucleate assembly of the platform of the 30S subunit by binding and bridging several RNA helices of the 16S rRNA. Functionally, forms an intersubunit bridge (bridge B4) with the 23S rRNA of the 50S subunit in the ribosome. The protein is Small ribosomal subunit protein uS15 of Mycoplasmopsis agalactiae (strain NCTC 10123 / CIP 59.7 / PG2) (Mycoplasma agalactiae).